The chain runs to 198 residues: Glycerol-3-phosphate acyltransferase (198 aa).

6 helical membrane-spanning segments follow: residues 1–21 (MNLL…GYLA), 55–75 (VFLL…YLLL), 79–99 (WQVA…WLNW), 111–131 (IFLG…IIMI), 136–156 (IVSL…FLSF), and 158–178 (GSNL…LVIW).

This sequence belongs to the PlsY family. In terms of assembly, probably interacts with PlsX.

The protein resides in the cell inner membrane. It carries out the reaction an acyl phosphate + sn-glycerol 3-phosphate = a 1-acyl-sn-glycero-3-phosphate + phosphate. Its pathway is lipid metabolism; phospholipid metabolism. In terms of biological role, catalyzes the transfer of an acyl group from acyl-phosphate (acyl-PO(4)) to glycerol-3-phosphate (G3P) to form lysophosphatidic acid (LPA). This enzyme utilizes acyl-phosphate as fatty acyl donor, but not acyl-CoA or acyl-ACP. The chain is Glycerol-3-phosphate acyltransferase from Prochlorococcus marinus (strain NATL2A).